Reading from the N-terminus, the 590-residue chain is Laccase-19 (590 aa).

An N-terminal signal peptide occupies residues 1-28 (MEKLSMVTSLLCAITVAVLAVAVVSGEA). 2 Plastocyanin-like domains span residues 36–152 (VVHE…PRDG) and 161–315 (KDVP…YAGT). Asn-41 and Asn-47 each carry an N-linked (GlcNAc...) asparagine glycan. Residues His-86 and His-88 each coordinate Cu cation. Asn-120 carries N-linked (GlcNAc...) asparagine glycosylation. Residues His-131 and His-133 each coordinate Cu cation. N-linked (GlcNAc...) asparagine glycosylation is found at Asn-205, Asn-344, Asn-378, Asn-397, Asn-434, and Asn-465. The region spanning 424–566 (DFPIRPPRPF…ATAFIVEDGP (143 aa)) is the Plastocyanin-like 3 domain. Cu cation is bound by residues Asn-483, His-486, His-488, His-545, Cys-546, His-547, His-551, and Met-556. Positions 565 to 590 (GPTPETSLPPPPPEFKRCGNNGLSQP) are disordered.

Belongs to the multicopper oxidase family. Cu cation is required as a cofactor.

Its subcellular location is the secreted. It is found in the extracellular space. The protein resides in the apoplast. It catalyses the reaction 4 hydroquinone + O2 = 4 benzosemiquinone + 2 H2O. In terms of biological role, lignin degradation and detoxification of lignin-derived products. The protein is Laccase-19 (LAC19) of Oryza sativa subsp. japonica (Rice).